Consider the following 420-residue polypeptide: Cyclin-B2-1 (420 aa).

Residues 1-61 (MDRASENRRL…EKSGKEEQKP (61 aa)) form a disordered region. A compositionally biased stretch (basic and acidic residues) spans 49–60 (PMLEKSGKEEQK).

This sequence belongs to the cyclin family. Cyclin AB subfamily. Interacts with CDKB2-1. In terms of tissue distribution, expressed in the root apices.

Involved in the control of the cell cycle at the G2/M (mitosis) transition. May activate CDKB2-1 kinase. The polypeptide is Cyclin-B2-1 (CYCB2-1) (Oryza sativa subsp. japonica (Rice)).